Here is a 487-residue protein sequence, read N- to C-terminus: Cytochrome P450 2C21 (487 aa).

Heme is bound at residue Cys432.

The protein belongs to the cytochrome P450 family. It depends on heme as a cofactor. Liver.

It localises to the endoplasmic reticulum membrane. The protein localises to the microsome membrane. It catalyses the reaction an organic molecule + reduced [NADPH--hemoprotein reductase] + O2 = an alcohol + oxidized [NADPH--hemoprotein reductase] + H2O + H(+). Functionally, cytochromes P450 are a group of heme-thiolate monooxygenases. In liver microsomes, this enzyme is involved in an NADPH-dependent electron transport pathway. It oxidizes a variety of structurally unrelated compounds, including steroids, fatty acids, and xenobiotics. Showed testosterone hydrolase activity. This Canis lupus familiaris (Dog) protein is Cytochrome P450 2C21 (CYP2C21).